We begin with the raw amino-acid sequence, 1401 residues long: DNA-directed RNA polymerase subunit beta (1401 aa).

The protein belongs to the RNA polymerase beta chain family. As to quaternary structure, the RNAP catalytic core consists of 2 alpha, 1 beta, 1 beta' and 1 omega subunit. When a sigma factor is associated with the core the holoenzyme is formed, which can initiate transcription.

It carries out the reaction RNA(n) + a ribonucleoside 5'-triphosphate = RNA(n+1) + diphosphate. In terms of biological role, DNA-dependent RNA polymerase catalyzes the transcription of DNA into RNA using the four ribonucleoside triphosphates as substrates. In Desulforapulum autotrophicum (strain ATCC 43914 / DSM 3382 / VKM B-1955 / HRM2) (Desulfobacterium autotrophicum), this protein is DNA-directed RNA polymerase subunit beta.